An 83-amino-acid chain; its full sequence is Large ribosomal subunit protein bL27 (83 aa).

The interval 1 to 21 (MAHKRSSGAGRNGRDSNPKYL) is disordered.

This sequence belongs to the bacterial ribosomal protein bL27 family.

In Kosmotoga olearia (strain ATCC BAA-1733 / DSM 21960 / TBF 19.5.1), this protein is Large ribosomal subunit protein bL27.